We begin with the raw amino-acid sequence, 213 residues long: Kynurenine formamidase (213 aa).

Substrate is bound at residue W18. Zn(2+)-binding residues include H48, H52, and D54. H58 acts as the Proton donor/acceptor in catalysis. Zn(2+) is bound by residues H160 and E172.

It belongs to the Cyclase 1 superfamily. KynB family. Homodimer. Zn(2+) is required as a cofactor.

It catalyses the reaction N-formyl-L-kynurenine + H2O = L-kynurenine + formate + H(+). Its pathway is amino-acid degradation; L-tryptophan degradation via kynurenine pathway; L-kynurenine from L-tryptophan: step 2/2. Catalyzes the hydrolysis of N-formyl-L-kynurenine to L-kynurenine, the second step in the kynurenine pathway of tryptophan degradation. This is Kynurenine formamidase from Burkholderia lata (strain ATCC 17760 / DSM 23089 / LMG 22485 / NCIMB 9086 / R18194 / 383).